The following is a 486-amino-acid chain: Cardiolipin synthase A (486 aa).

2 helical membrane-spanning segments follow: residues Thr-3–Val-23 and Met-38–Phe-58. PLD phosphodiesterase domains are found at residues Met-219–Arg-246 and Glu-399–Ser-426. Residues His-224, Lys-226, Asp-231, His-404, Lys-406, and Asp-411 contribute to the active site.

It belongs to the phospholipase D family. Cardiolipin synthase subfamily. ClsA sub-subfamily.

Its subcellular location is the cell inner membrane. The catalysed reaction is 2 a 1,2-diacyl-sn-glycero-3-phospho-(1'-sn-glycerol) = a cardiolipin + glycerol. In terms of biological role, catalyzes the reversible phosphatidyl group transfer from one phosphatidylglycerol molecule to another to form cardiolipin (CL) (diphosphatidylglycerol) and glycerol. This chain is Cardiolipin synthase A, found in Yersinia pseudotuberculosis serotype IB (strain PB1/+).